We begin with the raw amino-acid sequence, 343 residues long: N-acetyl-gamma-glutamyl-phosphate reductase (343 aa).

Residue C146 is part of the active site.

Belongs to the NAGSA dehydrogenase family. Type 1 subfamily.

Its subcellular location is the cytoplasm. It carries out the reaction N-acetyl-L-glutamate 5-semialdehyde + phosphate + NADP(+) = N-acetyl-L-glutamyl 5-phosphate + NADPH + H(+). It functions in the pathway amino-acid biosynthesis; L-arginine biosynthesis; N(2)-acetyl-L-ornithine from L-glutamate: step 3/4. Its function is as follows. Catalyzes the NADPH-dependent reduction of N-acetyl-5-glutamyl phosphate to yield N-acetyl-L-glutamate 5-semialdehyde. This is N-acetyl-gamma-glutamyl-phosphate reductase from Paenarthrobacter aurescens (strain TC1).